The chain runs to 400 residues: Phosphoglycerate kinase (400 aa).

Residues 23 to 25 (DLN), Arg-38, 61 to 64 (HFGR), Arg-120, and Arg-153 each bind substrate. Residues Lys-203, Glu-325, and 355 to 358 (GGDT) contribute to the ATP site.

This sequence belongs to the phosphoglycerate kinase family. Monomer.

It is found in the cytoplasm. The catalysed reaction is (2R)-3-phosphoglycerate + ATP = (2R)-3-phospho-glyceroyl phosphate + ADP. It functions in the pathway carbohydrate degradation; glycolysis; pyruvate from D-glyceraldehyde 3-phosphate: step 2/5. The polypeptide is Phosphoglycerate kinase (Methylobacterium radiotolerans (strain ATCC 27329 / DSM 1819 / JCM 2831 / NBRC 15690 / NCIMB 10815 / 0-1)).